Consider the following 235-residue polypeptide: MVVEETIKATSTEDLSNTIANQNPRGRGGDEDEELEEGEIVGDDDLDSSNLSAAIVHQPHPLEHSWTFWFDNPSAKSKQATWGASIRPIYTFSTVEEFWSVYNNIHHPSKLALRADLYCFKHKIEPKWEDPVCANGGKWTVNFSRGKSDNGWLYTLLAMIGEQFDCGDEICGAVVNVRSGQDKISIWTKNASNEAAQASIGKQWKEFLDYNDSIGFIFHEDAKKFDRHAKNKYSV.

Residues 1–36 (MVVEETIKATSTEDLSNTIANQNPRGRGGDEDEELE) are disordered. Positions 8 to 24 (KATSTEDLSNTIANQNP) are enriched in polar residues. EIF4G-binding stretches follow at residues 60–63 (HPLE) and 70–106 (FDNP…NNIH). MRNA is bound by residues 78-83 (KQATWG), Lys-110, and 128-129 (WE). Cys-133 and Cys-171 are joined by a disulfide. An EIF4G-binding region spans residues 154–163 (YTLLAMIGEQ). MRNA is bound by residues 178-183 (RSGQDK) and 223-227 (KKFDR).

This sequence belongs to the eukaryotic initiation factor 4E family. In terms of assembly, EIF4F is a multi-subunit complex, the composition of which varies with external and internal environmental conditions. It is composed of at least EIF4A, EIF4E and EIF4G. EIF4E is also known to interact with other partners. In higher plants two isoforms of EIF4F have been identified, named isoform EIF4F and isoform EIF(iso)4F. Isoform EIF4F has subunits p220 and p26, whereas isoform EIF(iso)4F has subunits p82 and p28. As to quaternary structure, (Microbial infection) Interacts with potyvirus viral genome-linked protein (VPg); this interaction is possible in susceptible hosts but impaired in resistant plants. According to the redox status, the Cys-133-Cys-171 disulfide bridge may have a role in regulating protein function by affecting its ability to bind capped mRNA.

Its subcellular location is the nucleus. It is found in the cytoplasm. Component of the protein complex eIF4F, which is involved in the recognition of the mRNA cap, ATP-dependent unwinding of 5'-terminal secondary structure and recruitment of mRNA to the ribosome. Recognizes and binds the 7-methylguanosine-containing mRNA cap during an early step in the initiation of protein synthesis and facilitates ribosome binding by inducing the unwinding of the mRNAs secondary structures. Key component of recessive resistance to potyviruses. Its function is as follows. (Microbial infection) Susceptibility host factor required for viral infection by recruiting viral RNAs to the host ribosomal complex via an interaction with viral genome-linked protein (VPg). The sequence is that of Eukaryotic translation initiation factor 4E-1 from Citrullus lanatus (Watermelon).